The following is a 164-amino-acid chain: UPF0251 protein MA_0157 (164 aa).

Positions glycine 91 to arginine 124 are disordered. A compositionally biased stretch (gly residues) spans aspartate 99–arginine 115.

This sequence belongs to the UPF0251 family.

The chain is UPF0251 protein MA_0157 from Methanosarcina acetivorans (strain ATCC 35395 / DSM 2834 / JCM 12185 / C2A).